A 501-amino-acid polypeptide reads, in one-letter code: Probable cytochrome P450 28d2 (501 aa).

C446 serves as a coordination point for heme.

Belongs to the cytochrome P450 family. The cofactor is heme.

The protein localises to the endoplasmic reticulum membrane. The protein resides in the microsome membrane. In terms of biological role, may be involved in the metabolism of insect hormones and in the breakdown of synthetic insecticides. The protein is Probable cytochrome P450 28d2 (Cyp28d2) of Drosophila melanogaster (Fruit fly).